The primary structure comprises 285 residues: 33 kDa chaperonin (285 aa).

2 disulfides stabilise this stretch: Cys-228–Cys-230 and Cys-261–Cys-264.

The protein belongs to the HSP33 family. Post-translationally, under oxidizing conditions two disulfide bonds are formed involving the reactive cysteines. Under reducing conditions zinc is bound to the reactive cysteines and the protein is inactive.

It localises to the cytoplasm. Its function is as follows. Redox regulated molecular chaperone. Protects both thermally unfolding and oxidatively damaged proteins from irreversible aggregation. Plays an important role in the bacterial defense system toward oxidative stress. In Hahella chejuensis (strain KCTC 2396), this protein is 33 kDa chaperonin.